The sequence spans 42 residues: Photosystem II reaction center protein J (42 aa).

The helical transmembrane segment at 10–30 (IPLWLVGTVAGTAAIGLLGIF) threads the bilayer.

The protein belongs to the PsbJ family. PSII is composed of 1 copy each of membrane proteins PsbA, PsbB, PsbC, PsbD, PsbE, PsbF, PsbH, PsbI, PsbJ, PsbK, PsbL, PsbM, PsbT, PsbX, PsbY, PsbZ, Psb30/Ycf12, at least 3 peripheral proteins of the oxygen-evolving complex and a large number of cofactors. It forms dimeric complexes.

The protein localises to the plastid. It is found in the chloroplast thylakoid membrane. Functionally, one of the components of the core complex of photosystem II (PSII). PSII is a light-driven water:plastoquinone oxidoreductase that uses light energy to abstract electrons from H(2)O, generating O(2) and a proton gradient subsequently used for ATP formation. It consists of a core antenna complex that captures photons, and an electron transfer chain that converts photonic excitation into a charge separation. The protein is Photosystem II reaction center protein J of Pleurastrum terricola (Filamentous green alga).